A 211-amino-acid chain; its full sequence is Protein-L-isoaspartate O-methyltransferase (211 aa).

Ser-62 is a catalytic residue.

Belongs to the methyltransferase superfamily. L-isoaspartyl/D-aspartyl protein methyltransferase family.

It is found in the cytoplasm. It catalyses the reaction [protein]-L-isoaspartate + S-adenosyl-L-methionine = [protein]-L-isoaspartate alpha-methyl ester + S-adenosyl-L-homocysteine. Functionally, catalyzes the methyl esterification of L-isoaspartyl residues in peptides and proteins that result from spontaneous decomposition of normal L-aspartyl and L-asparaginyl residues. It plays a role in the repair and/or degradation of damaged proteins. The sequence is that of Protein-L-isoaspartate O-methyltransferase from Shewanella denitrificans (strain OS217 / ATCC BAA-1090 / DSM 15013).